Here is a 92-residue protein sequence, read N- to C-terminus: Small ribosomal subunit protein uS19 (92 aa).

This sequence belongs to the universal ribosomal protein uS19 family.

Its function is as follows. Protein S19 forms a complex with S13 that binds strongly to the 16S ribosomal RNA. In Corynebacterium diphtheriae (strain ATCC 700971 / NCTC 13129 / Biotype gravis), this protein is Small ribosomal subunit protein uS19.